The sequence spans 370 residues: Uroporphyrinogen decarboxylase (370 aa).

Substrate contacts are provided by residues 29–33, aspartate 79, tyrosine 155, serine 210, and histidine 342; that span reads RQAGR.

The protein belongs to the uroporphyrinogen decarboxylase family. Homodimer.

It is found in the cytoplasm. The enzyme catalyses uroporphyrinogen III + 4 H(+) = coproporphyrinogen III + 4 CO2. It functions in the pathway porphyrin-containing compound metabolism; protoporphyrin-IX biosynthesis; coproporphyrinogen-III from 5-aminolevulinate: step 4/4. Catalyzes the decarboxylation of four acetate groups of uroporphyrinogen-III to yield coproporphyrinogen-III. This chain is Uroporphyrinogen decarboxylase, found in Delftia acidovorans (strain DSM 14801 / SPH-1).